Reading from the N-terminus, the 440-residue chain is Thymidine phosphorylase (440 aa).

The protein belongs to the thymidine/pyrimidine-nucleoside phosphorylase family. In terms of assembly, homodimer.

It catalyses the reaction thymidine + phosphate = 2-deoxy-alpha-D-ribose 1-phosphate + thymine. The protein operates within pyrimidine metabolism; dTMP biosynthesis via salvage pathway; dTMP from thymine: step 1/2. The enzymes which catalyze the reversible phosphorolysis of pyrimidine nucleosides are involved in the degradation of these compounds and in their utilization as carbon and energy sources, or in the rescue of pyrimidine bases for nucleotide synthesis. This chain is Thymidine phosphorylase, found in Enterobacter sp. (strain 638).